The following is a 274-amino-acid chain: MNKTAIALLALLASSASLAATPWQKITQPVPGSAQSIGSFSNGCIVGADTLPIQSEHYQVMRTDQRRYFGHPDLVMFIQRLSSQVSNLGMGTVLIGDMGMPAGGRFNGGHASHQTGLDVDIFLQLPKTRWTSAQLLRPQALDLVSRDGKHVVSTLWKPEIFSLIKLAAQDKDVTRIFVNPAIKQQLCLDAGTDRDWLRKVRPWFQHRAHMHVRLRCPADSLECEDQPLPPPGDGCGAELQSWFEPPKPGTTKPEKKTPPPLPPSCQALLDEHVI.

An N-terminal signal peptide occupies residues 1-19 (MNKTAIALLALLASSASLA). Intrachain disulfides connect Cys-44/Cys-265, Cys-187/Cys-235, and Cys-216/Cys-223. Zn(2+) is bound by residues His-110, His-113, Asp-120, Asp-147, His-150, and His-211. Residues 227-274 (PLPPPGDGCGAELQSWFEPPKPGTTKPEKKTPPPLPPSCQALLDEHVI) form a disordered region.

It belongs to the peptidase M74 family. As to quaternary structure, dimer. It depends on Zn(2+) as a cofactor.

The protein resides in the periplasm. Murein endopeptidase that cleaves the D-alanyl-meso-2,6-diamino-pimelyl amide bond that connects peptidoglycan strands. Likely plays a role in the removal of murein from the sacculus. This Escherichia coli (strain ATCC 8739 / DSM 1576 / NBRC 3972 / NCIMB 8545 / WDCM 00012 / Crooks) protein is Penicillin-insensitive murein endopeptidase.